The chain runs to 275 residues: Arylalkylamine N-acetyltransferase 1 (275 aa).

Acetyl-CoA is bound by residues leucine 181–valine 183 and glycine 189–alanine 193. In terms of domain architecture, N-acetyltransferase spans leucine 181–proline 254.

This sequence belongs to the acetyltransferase family. AANAT subfamily. As to expression, in the adult, expressed in the midgut portion of the thoracic segments and the frontal half of the abdomen (at protein level). Expressed in the epithelial cell layer facing the lumen of the gut (at protein level). In the brain, expressed in a sub-populations of neurons and astrocytes, and in a set of distinct stripes in the optic lobes (at protein level). Expressed mainly in serotonergic neurons but also in subsets of glutamatergic, GABAergic and cholinergic neurons (at protein level).

Its subcellular location is the cytoplasm. The protein localises to the nucleus. It catalyses the reaction a 2-arylethylamine + acetyl-CoA = an N-acetyl-2-arylethylamine + CoA + H(+). It carries out the reaction serotonin + acetyl-CoA = N-acetylserotonin + CoA + H(+). The catalysed reaction is dopamine + acetyl-CoA = N-acetyldopamine + CoA + H(+). The enzyme catalyses tyramine + acetyl-CoA = N-acetyltyramine + CoA + H(+). It catalyses the reaction octopamine + acetyl-CoA = N-acetyloctopamine + CoA + H(+). It carries out the reaction 5-methoxytryptamine + acetyl-CoA = melatonin + CoA + H(+). The catalysed reaction is 2-phenylethylamine + acetyl-CoA = N-(2-phenylethyl)acetamide + CoA + H(+). The enzyme catalyses noradrenaline + acetyl-CoA = N-acetylnoradrenaline + CoA + H(+). It catalyses the reaction tyramine + butanoyl-CoA = N-butanoyltyramine + CoA + H(+). It carries out the reaction tyramine + hexanoyl-CoA = N-hexanoyltyramine + CoA + H(+). The catalysed reaction is tryptamine + acetyl-CoA = N-acetyltryptamine + CoA + H(+). The enzyme catalyses dopamine + hexadecanoyl-CoA = N-hexadecanoyl-dopamine + CoA + H(+). It catalyses the reaction dopamine + (9Z)-octadecenoyl-CoA = N-(9Z-octadecanoyl)-dopamine + CoA + H(+). It carries out the reaction serotonin + hexadecanoyl-CoA = N-hexadecanoyl-serotonin + CoA + H(+). The catalysed reaction is serotonin + (9Z)-octadecenoyl-CoA = N-(9Z-octadecenoyl)-serotonin + CoA + H(+). The enzyme catalyses serotonin + octadecanoyl-CoA = N-octadecanoyl-serotonin + CoA + H(+). It catalyses the reaction serotonin + (5Z,8Z,11Z,14Z)-eicosatetraenoyl-CoA = N-[(5Z,8Z,11Z,14Z)-eicosatetraenoyl]-serotonin + CoA + H(+). It participates in aromatic compound metabolism; melatonin biosynthesis; melatonin from serotonin: step 1/2. Inhibited by long-chain acyl-CoA thioesters, oleoyl-CoA (an analog of acetyl-CoA) and tyrosol (an analog of tyramine). Catalyzes N-acetylation of tryptamine, tyramine, dopamine, serotonin and octopamine. In astrocytes, regulates sleep homeostasis by limiting the accumulation of serotonin and dopamine in the brain upon sleep deprivation. Is not essential for sclerotization. The sequence is that of Arylalkylamine N-acetyltransferase 1 from Drosophila melanogaster (Fruit fly).